The sequence spans 156 residues: Small ribosomal subunit protein uS7 (156 aa).

Belongs to the universal ribosomal protein uS7 family. In terms of assembly, part of the 30S ribosomal subunit. Contacts proteins S9 and S11.

One of the primary rRNA binding proteins, it binds directly to 16S rRNA where it nucleates assembly of the head domain of the 30S subunit. Is located at the subunit interface close to the decoding center, probably blocks exit of the E-site tRNA. This Aeromonas hydrophila subsp. hydrophila (strain ATCC 7966 / DSM 30187 / BCRC 13018 / CCUG 14551 / JCM 1027 / KCTC 2358 / NCIMB 9240 / NCTC 8049) protein is Small ribosomal subunit protein uS7.